Here is a 122-residue protein sequence, read N- to C-terminus: Large ribosomal subunit protein uL14 (122 aa).

Belongs to the universal ribosomal protein uL14 family. Part of the 50S ribosomal subunit. Forms a cluster with proteins L3 and L19. In the 70S ribosome, L14 and L19 interact and together make contacts with the 16S rRNA in bridges B5 and B8.

In terms of biological role, binds to 23S rRNA. Forms part of two intersubunit bridges in the 70S ribosome. The sequence is that of Large ribosomal subunit protein uL14 from Exiguobacterium sibiricum (strain DSM 17290 / CCUG 55495 / CIP 109462 / JCM 13490 / 255-15).